A 146-amino-acid polypeptide reads, in one-letter code: uncharacterized protein (146 aa).

This is an uncharacterized protein from Saccharomyces cerevisiae (strain ATCC 204508 / S288c) (Baker's yeast).